A 151-amino-acid chain; its full sequence is Large ribosomal subunit protein uL15 (151 aa).

A disordered region spans residues 1–45 (MNLSSLKPVKGSTKTCKRVGRGQGSGCGGTSTRGHKGQKSRSGYS). Residues 21–31 (RGQGSGCGGTS) show a composition bias toward gly residues.

Belongs to the universal ribosomal protein uL15 family. In terms of assembly, part of the 50S ribosomal subunit.

Functionally, binds to the 23S rRNA. The sequence is that of Large ribosomal subunit protein uL15 from Azobacteroides pseudotrichonymphae genomovar. CFP2.